Reading from the N-terminus, the 632-residue chain is Pheromone-processing carboxypeptidase kex1 (632 aa).

The first 38 residues, 1–38 (MLLTTPSSRGSRAQSGIANVSWLALSLLLLFSPTLGSA), serve as a signal peptide directing secretion. Residues 39–523 (KSAADYYVRS…KETEWKAYAK (485 aa)) are Lumenal-facing. 2 N-linked (GlcNAc...) asparagine glycosylation sites follow: asparagine 119 and asparagine 126. Residues serine 190 and aspartate 390 contribute to the active site. Asparagine 441 and asparagine 449 each carry an N-linked (GlcNAc...) asparagine glycan. The active site involves histidine 452. The interval 480–509 (KPADSRIDGEKLPQTSVGGHPNSTAAEQQA) is disordered. A compositionally biased stretch (polar residues) spans 492–506 (PQTSVGGHPNSTAAE). Asparagine 501 is a glycosylation site (N-linked (GlcNAc...) asparagine). A helical membrane pass occupies residues 524-544 (SGEAALIVVIIGVTVWGFFIW). Residues 545 to 632 (RSRRRNRGYQ…SSTKPGGAQP (88 aa)) lie on the Cytoplasmic side of the membrane. Positions 574 to 632 (RSGPADVEAGDFDESELDNLHSPGLEQEHYAVGDDSDEESPNHQPAAPPSSTKPGGAQP) are disordered. Positions 581–590 (EAGDFDESEL) are enriched in acidic residues.

It belongs to the peptidase S10 family.

Its subcellular location is the golgi apparatus. The protein resides in the trans-Golgi network membrane. It carries out the reaction Preferential release of a C-terminal arginine or lysine residue.. Functionally, protease with a carboxypeptidase B-like function involved in the C-terminal processing of the lysine and arginine residues from protein precursors. Promotes cell fusion and is involved in the programmed cell death. The polypeptide is Pheromone-processing carboxypeptidase kex1 (kex1) (Aspergillus fumigatus (strain CBS 144.89 / FGSC A1163 / CEA10) (Neosartorya fumigata)).